Here is a 355-residue protein sequence, read N- to C-terminus: Butyrate kinase 1 (355 aa).

The protein belongs to the acetokinase family.

The protein localises to the cytoplasm. The catalysed reaction is butanoate + ATP = butanoyl phosphate + ADP. The protein operates within lipid metabolism; butanoate metabolism. In terms of biological role, catalyzes the conversion of butyryl-CoA through butyryl phosphate to butyrate. This chain is Butyrate kinase 1 (buk1), found in Clostridium acetobutylicum (strain ATCC 824 / DSM 792 / JCM 1419 / IAM 19013 / LMG 5710 / NBRC 13948 / NRRL B-527 / VKM B-1787 / 2291 / W).